A 90-amino-acid chain; its full sequence is Darcynin 1 (90 aa).

This sequence belongs to the darcynin family.

The polypeptide is Darcynin 1 (Acinetobacter baumannii (strain ATCC 17978 / DSM 105126 / CIP 53.77 / LMG 1025 / NCDC KC755 / 5377)).